The chain runs to 123 residues: ATP synthase epsilon chain (123 aa).

The protein belongs to the ATPase epsilon chain family. As to quaternary structure, F-type ATPases have 2 components, CF(1) - the catalytic core - and CF(0) - the membrane proton channel. CF(1) has five subunits: alpha(3), beta(3), gamma(1), delta(1), epsilon(1). CF(0) has three main subunits: a, b and c.

The protein localises to the cell inner membrane. Functionally, produces ATP from ADP in the presence of a proton gradient across the membrane. The sequence is that of ATP synthase epsilon chain (atpC) from Helicobacter pylori (strain ATCC 700392 / 26695) (Campylobacter pylori).